The following is a 1071-amino-acid chain: Tricorn protease (1071 aa).

Residues 39–310 (MPNLLLNPDI…EKIEKIEIGD (272 aa)) form a six-bladed beta propeller region. Residues 131-132 (RR) form a binds the substrate's C-terminus region. The seven-bladed beta propeller stretch occupies residues 326-675 (AEDFSPLDGD…EDERTVETDK (350 aa)). The interval 679-745 (VSSIHEEFLQ…VEMQGEYRTS (67 aa)) is C-1; helical bundle. His-746 (charge relay system) is an active-site residue. Residues 761–855 (RSGRIACDFK…DLMIDILDDD (95 aa)) are PDZ-like. Positions 856–1061 (RFIRYRSWVE…IDALIEELRN (206 aa)) are C-2; alpha-beta sandwich. Residue 916–918 (GGG) participates in substrate binding. Catalysis depends on Ser-965, which acts as the Nucleophile. A substrate-binding site is contributed by 993–995 (GIT). Glu-1023 serves as the catalytic Charge relay system.

This sequence belongs to the peptidase S41B family. Part of the Tricorn proteolytic complex. Assembles to form a hexameric toroid, 20 copies of which may then assemble to form an icosahedral supermolecule of 14.6 MDa.

It localises to the cytoplasm. In terms of biological role, tricorn degrades oligopeptides (probably derived from the proteasome) and channels the products to F1, F2 and F3 proteases, which then catalyze the terminal degradation step, yielding free amino acids. The protein is Tricorn protease (tri) of Thermoplasma acidophilum (strain ATCC 25905 / DSM 1728 / JCM 9062 / NBRC 15155 / AMRC-C165).